The sequence spans 91 residues: UPF0386 protein CC_0226 (91 aa).

This sequence belongs to the UPF0386 family.

The sequence is that of UPF0386 protein CC_0226 from Caulobacter vibrioides (strain ATCC 19089 / CIP 103742 / CB 15) (Caulobacter crescentus).